The chain runs to 372 residues: N-methyl-L-tryptophan oxidase (372 aa).

Residue 4-34 (DLIIIGSGSVGAAAGYYATRAGLKVLMTDAH) participates in FAD binding. At cysteine 307 the chain carries S-8alpha-FAD cysteine.

It belongs to the MSOX/MTOX family. MTOX subfamily. In terms of assembly, monomer. FAD is required as a cofactor.

It catalyses the reaction N(alpha)-methyl-L-tryptophan + O2 + H2O = L-tryptophan + formaldehyde + H2O2. Its function is as follows. Catalyzes the oxidative demethylation of N-methyl-L-tryptophan. The polypeptide is N-methyl-L-tryptophan oxidase (Salmonella agona (strain SL483)).